The following is a 107-amino-acid chain: U20-lycotoxin-Ls1b (107 aa).

Positions M1 to A30 are cleaved as a signal peptide. A WAP domain is found at G31–S76. 5 disulfides stabilise this stretch: C34/C64, C42/C68, C51/C63, C52/C90, and C57/C72.

This sequence belongs to the venom protein 11 family. 02 (wap-2) subfamily. Post-translationally, contains 5 disulfide bonds. As to expression, expressed by the venom gland.

It is found in the secreted. Its function is as follows. Has antibacterial activity. This chain is U20-lycotoxin-Ls1b, found in Lycosa singoriensis (Wolf spider).